Consider the following 151-residue polypeptide: 3-hydroxyacyl-[acyl-carrier-protein] dehydratase FabZ (151 aa).

H54 is an active-site residue.

Belongs to the thioester dehydratase family. FabZ subfamily.

It is found in the cytoplasm. The catalysed reaction is a (3R)-hydroxyacyl-[ACP] = a (2E)-enoyl-[ACP] + H2O. In terms of biological role, involved in unsaturated fatty acids biosynthesis. Catalyzes the dehydration of short chain beta-hydroxyacyl-ACPs and long chain saturated and unsaturated beta-hydroxyacyl-ACPs. The sequence is that of 3-hydroxyacyl-[acyl-carrier-protein] dehydratase FabZ from Blochmanniella pennsylvanica (strain BPEN).